A 278-amino-acid chain; its full sequence is Undecaprenyl-diphosphatase 1 (278 aa).

7 helical membrane-spanning segments follow: residues 46–66 (VVGF…VYFF), 91–111 (YTFT…GLAA), 119–139 (LASL…MWFA), 153–173 (SLPD…FPGF), 191–211 (VAAT…AGLY), 225–245 (PLAV…AWLL), and 256–276 (FIIY…GGAI).

This sequence belongs to the UppP family.

The protein resides in the cell membrane. It carries out the reaction di-trans,octa-cis-undecaprenyl diphosphate + H2O = di-trans,octa-cis-undecaprenyl phosphate + phosphate + H(+). In terms of biological role, catalyzes the dephosphorylation of undecaprenyl diphosphate (UPP). Confers resistance to bacitracin. The polypeptide is Undecaprenyl-diphosphatase 1 (Frankia alni (strain DSM 45986 / CECT 9034 / ACN14a)).